A 227-amino-acid polypeptide reads, in one-letter code: Adapter protein MecA 1 (227 aa).

The protein belongs to the MecA family. In terms of assembly, homodimer.

Its function is as follows. Enables the recognition and targeting of unfolded and aggregated proteins to the ClpC protease or to other proteins involved in proteolysis. Acts negatively in the development of competence by binding ComK and recruiting it to the ClpCP protease. When overexpressed, inhibits sporulation. Also involved in Spx degradation by ClpC. The sequence is that of Adapter protein MecA 1 (mecA1) from Bacillus cereus (strain ATCC 14579 / DSM 31 / CCUG 7414 / JCM 2152 / NBRC 15305 / NCIMB 9373 / NCTC 2599 / NRRL B-3711).